A 118-amino-acid chain; its full sequence is Non-specific lipid-transfer protein (118 aa).

The first 27 residues, 1 to 27, serve as a signal peptide directing secretion; it reads MGVSKVAIAVAVMLMVVVINHPAVVEG. Disulfide bonds link cysteine 30/cysteine 75, cysteine 40/cysteine 54, cysteine 55/cysteine 100, and cysteine 77/cysteine 114.

The protein belongs to the plant LTP family. Post-translationally, disulfide bonds.

In terms of biological role, plant non-specific lipid-transfer proteins transfer phospholipids as well as galactolipids across membranes. May play a role in wax or cutin deposition in the cell walls of expanding epidermal cells and certain secretory tissues. This Apium graveolens (Celery) protein is Non-specific lipid-transfer protein.